Consider the following 359-residue polypeptide: Nicotinate-nucleotide--dimethylbenzimidazole phosphoribosyltransferase (359 aa).

The active-site Proton acceptor is Glu-318.

Belongs to the CobT family. Homodimer.

It carries out the reaction 5,6-dimethylbenzimidazole + nicotinate beta-D-ribonucleotide = alpha-ribazole 5'-phosphate + nicotinate + H(+). The protein operates within nucleoside biosynthesis; alpha-ribazole biosynthesis; alpha-ribazole from 5,6-dimethylbenzimidazole: step 1/2. Its function is as follows. Catalyzes the synthesis of alpha-ribazole-5'-phosphate from nicotinate mononucleotide (NAMN) and 5,6-dimethylbenzimidazole (DMB). This is Nicotinate-nucleotide--dimethylbenzimidazole phosphoribosyltransferase from Escherichia coli O9:H4 (strain HS).